A 138-amino-acid chain; its full sequence is MSELFEEVEVEAYVYPTEDIEKVKKAMLNLIPDLEFEAFDRGDYIILTAKTRSRKALSRLYELFRGQAILDTARSFLEEGYFGEEIIIKVNKQAAYAGVVNFNEESPLGPITIIIRTKDPQRLMKWLAPRTKDGVPIE.

This sequence belongs to the UPF0201 family.

In Thermococcus kodakarensis (strain ATCC BAA-918 / JCM 12380 / KOD1) (Pyrococcus kodakaraensis (strain KOD1)), this protein is UPF0201 protein TK1335.